We begin with the raw amino-acid sequence, 389 residues long: MEQQEKKKRKVYRRRRLQSKPTSSFPLDLASEILLRLPVKSVVRFRCVSKLWSSIITDPYFIKTYETQSSTRQSLLFCFKQSDKLFVFSIPKHHYDSNSSSQAAIDRFQVKLPQEFSYPSPTESVHGLICFHVLATVIVWNPSMRQFLTLPKPRKSWKELTVFLGYDPIEGKHKVVCLPRNRTCDECQVLTLGSAQKSWRTVKTKHKHRSTNDTWGRCIKGVVYYIAYVYHTRVWCIMSFHVKSEKFDMIKLPLENIYRDVMINYEGRLACVDKLYTLNNDGIRLWILEDAEKHKWSSKQFLARYVHNDLRTNTISKLTGVTHAGEFVYISTQYLKSFVLFCDPKKNRFRKVEFNGIVDEEFRLSNGVGRGRIYALYNFPNHCESLMSL.

One can recognise an F-box domain in the interval 19-65 (SKPTSSFPLDLASEILLRLPVKSVVRFRCVSKLWSSIITDPYFIKTY).

The polypeptide is Putative F-box protein At1g47790 (Arabidopsis thaliana (Mouse-ear cress)).